Reading from the N-terminus, the 450-residue chain is Glucose-6-phosphate isomerase (450 aa).

At Thr39 the chain carries Phosphothreonine. Residue Glu291 is the Proton donor of the active site. Active-site residues include His312 and Lys426.

The protein belongs to the GPI family.

The protein resides in the cytoplasm. The enzyme catalyses alpha-D-glucose 6-phosphate = beta-D-fructose 6-phosphate. The protein operates within carbohydrate biosynthesis; gluconeogenesis. Its pathway is carbohydrate degradation; glycolysis; D-glyceraldehyde 3-phosphate and glycerone phosphate from D-glucose: step 2/4. In terms of biological role, catalyzes the reversible isomerization of glucose-6-phosphate to fructose-6-phosphate. This chain is Glucose-6-phosphate isomerase, found in Bacillus cereus (strain AH187).